The sequence spans 388 residues: MLPFFDSPSPMDIPLYQQLQLTPPSPKPDHHHHHHSTFFYYHHHPPPSPSFPSFPSPAAATIASPSPAMHPFMDLELEPHGQQLAAAEEDGAGGQGVDAGVPFGVDGAAAAAAARKDRHSKISTAGGMRDRRMRLSLDVARKFFALQDMLGFDKASKTVQWLLNMSKAAIREIMSDDASSVCEEDGSSSLSVDGKQQQHSNPADRGGGAGDHKGAAHGHSDGKKPAKPRRAAANPKPPRRLANAHPVPDKESRAKARERARERTKEKNRMRWVTLASAISVEAATAAAAAGEDKSPTSPSNNLNHSSSTNLVSTELEDGSSSTRHNGVGVSGGRMQEISAASEASDVIMAFANGGAYGDSGSYYLQQQHQQDQWELGGVVYANSRHYC.

Positions 115 to 173 (RKDRHSKISTAGGMRDRRMRLSLDVARKFFALQDMLGFDKASKTVQWLLNMSKAAIREI) constitute a TCP domain. Disordered stretches follow at residues 180–269 (SVCE…EKNR) and 289–331 (AAGE…VGVS). Polar residues predominate over residues 187–201 (SSSLSVDGKQQQHSN). Composition is skewed to basic and acidic residues over residues 210 to 224 (GDHKGAAHGHSDGKK) and 247 to 269 (VPDKESRAKARERARERTKEKNR). The 18-residue stretch at 250 to 267 (KESRAKARERARERTKEK) folds into the R domain. Positions 289–314 (AAGEDKSPTSPSNNLNHSSSTNLVST) are enriched in low complexity.

Interacts with MADS57. In terms of tissue distribution, expressed in the axillary bud of the first formed leaf node. Expressed in axillary buds, shoot apical meristem, young leaves, vascular tissues and the tips of crown roots.

The protein localises to the nucleus. Its function is as follows. Probable transcription factor that functions as a negative regulator of lateral branching, presumably through its expression in axillary buds. Involved in the fine tuning of shoot branching. May function as an integrator of multiple signaling pathways to regulate the development of axillary buds. Works partially downstream of strigolactones to inhibit bud outgrowth. Binds to MADS57 to suppress the negative regulation of D14 by MADS57 and balance the expression of D14 for tillering. The polypeptide is Transcription factor TB1 (Oryza sativa subsp. japonica (Rice)).